We begin with the raw amino-acid sequence, 488 residues long: Glutamyl-tRNA(Gln) amidotransferase subunit A (488 aa).

Catalysis depends on charge relay system residues K79 and S159. S183 serves as the catalytic Acyl-ester intermediate.

This sequence belongs to the amidase family. GatA subfamily. Heterotrimer of A, B and C subunits.

It catalyses the reaction L-glutamyl-tRNA(Gln) + L-glutamine + ATP + H2O = L-glutaminyl-tRNA(Gln) + L-glutamate + ADP + phosphate + H(+). Allows the formation of correctly charged Gln-tRNA(Gln) through the transamidation of misacylated Glu-tRNA(Gln) in organisms which lack glutaminyl-tRNA synthetase. The reaction takes place in the presence of glutamine and ATP through an activated gamma-phospho-Glu-tRNA(Gln). In Wolbachia pipientis subsp. Culex pipiens (strain wPip), this protein is Glutamyl-tRNA(Gln) amidotransferase subunit A.